Consider the following 527-residue polypeptide: Ribonuclease Y 2 (527 aa).

A helical membrane pass occupies residues 2–22 (IAMIATAIIGIVAGGGLGWAL). The 94-residue stretch at 339 to 432 (QYFHCGEVGW…VIAADAVSGA (94 aa)) folds into the HD domain.

This sequence belongs to the RNase Y family.

It is found in the cell membrane. Endoribonuclease that initiates mRNA decay. The sequence is that of Ribonuclease Y 2 from Bdellovibrio bacteriovorus (strain ATCC 15356 / DSM 50701 / NCIMB 9529 / HD100).